The following is a 440-amino-acid chain: Cytochrome c biogenesis protein Ccs1 (440 aa).

Helical transmembrane passes span 19–39 (LRLA…GTFI), 78–98 (NIWF…CTYT), and 164–184 (VGPI…ACGA).

It belongs to the Ccs1/CcsB family. May interact with CcsA.

The protein localises to the plastid. Its subcellular location is the chloroplast thylakoid membrane. Functionally, required during biogenesis of c-type cytochromes (cytochrome c6 and cytochrome f) at the step of heme attachment. The chain is Cytochrome c biogenesis protein Ccs1 from Emiliania huxleyi (Coccolithophore).